The primary structure comprises 78 residues: UPF0154 protein SSU98_1719 (78 aa).

The chain crosses the membrane as a helical span at residues 3–23 (LGLAILLIVLAFAGGVALGIY).

This sequence belongs to the UPF0154 family.

Its subcellular location is the cell membrane. This is UPF0154 protein SSU98_1719 from Streptococcus suis (strain 98HAH33).